We begin with the raw amino-acid sequence, 1145 residues long: Structure-specific endonuclease subunit SLX4 (1145 aa).

Positions 48 to 108 (ADIPVQPDPP…GKSKQQPSIS (61 aa)) are disordered. Residues 321–372 (ERETQKCRQLRQQHELVYAELERYYGDPQKLEEEVMQELDELEKLVADNMIE) are a coiled coil. Low complexity predominate over residues 382–393 (EAESSSTGSSPS). 3 disordered regions span residues 382–442 (EAES…EDEP), 613–634 (QSSH…SSFS), and 666–689 (SAEK…DLTQ). Basic and acidic residues predominate over residues 395–410 (EPPDKRPKMTMEDKEN). 3 stretches are compositionally biased toward polar residues: residues 411–430 (LQPT…TRCT), 613–633 (QSSH…SSSF), and 678–689 (YKQSDASVDLTQ).

This sequence belongs to the SLX4 family. As to quaternary structure, forms a heterodimer with SLX1. Interacts with mei-9; catalytic subunit of the MEI-9-ERCC1 endonuclease.

It localises to the nucleus. In terms of biological role, regulatory subunit that interacts with and increases the activity of different structure-specific endonucleases. Has several distinct roles in protecting genome stability by resolving diverse forms of deleterious DNA structures originating from replication and recombination intermediates and from DNA damage. Component of the SLX1-SLX4 structure-specific endonuclease that resolves DNA secondary structures generated during DNA repair and recombination. Has endonuclease activity towards branched DNA substrates, introducing single-strand cuts in duplex DNA close to junctions with ss-DNA. Interacts with the structure-specific MEI-9-ERCC1 endonuclease to generate meiotic crossovers. This is Structure-specific endonuclease subunit SLX4 (mus312) from Drosophila melanogaster (Fruit fly).